A 205-amino-acid polypeptide reads, in one-letter code: uncharacterized protein (205 aa).

This is an uncharacterized protein from Bacillus subtilis (strain 168).